A 448-amino-acid polypeptide reads, in one-letter code: Asparagine--tRNA ligase (448 aa).

Belongs to the class-II aminoacyl-tRNA synthetase family. In terms of assembly, homodimer.

Its subcellular location is the cytoplasm. The enzyme catalyses tRNA(Asn) + L-asparagine + ATP = L-asparaginyl-tRNA(Asn) + AMP + diphosphate + H(+). This Streptococcus mutans serotype c (strain ATCC 700610 / UA159) protein is Asparagine--tRNA ligase.